The chain runs to 267 residues: V-type proton ATPase subunit D (267 aa).

Belongs to the V-ATPase D subunit family. As to quaternary structure, V-ATPase is a heteromultimeric enzyme composed of a peripheral catalytic V1 complex (components A to H) attached to an integral membrane V0 proton pore complex (components: a, c, c', c'', d, e, f and VOA1).

The protein resides in the vacuole membrane. Functionally, subunit of the V1 complex of vacuolar(H+)-ATPase (V-ATPase), a multisubunit enzyme composed of a peripheral complex (V1) that hydrolyzes ATP and a membrane integral complex (V0) that translocates protons. V-ATPase is responsible for acidifying and maintaining the pH of intracellular compartments. The sequence is that of V-type proton ATPase subunit D (VMA8) from Candida albicans (strain SC5314 / ATCC MYA-2876) (Yeast).